The chain runs to 122 residues: Autophagy-related protein 8e (122 aa).

A lipid anchor (Phosphatidylethanolamine amidated glycine) is attached at glycine 118. Residues 119 to 122 (ASSI) constitute a propeptide, removed in mature form.

Belongs to the ATG8 family. Interacts with ATG4. Interacts with SH3P2. Interacts with ATG1A and ATG11. Binds to ATG1A and ATG11 on autophagic vesicles. The C-terminal 4 residues are removed by ATG4 to expose Gly-118 at the C-terminus. This Gly-118 forms then a thioester bond with the 'Cys-558' of ATG7 (E1-like activating enzyme) before being transferred to the 'Cys-258' of ATG3 (the specific E2 conjugating enzyme), in order to be finally amidated with phosphatidylethanolamine. This lipid modification anchors ATG8 to autophagosomes. As to expression, constitutively expressed.

The protein localises to the cytoplasmic vesicle. It is found in the autophagosome membrane. It localises to the vacuole membrane. The protein resides in the cytoplasm. Its subcellular location is the cytoskeleton. Its function is as follows. Ubiquitin-like modifier involved in autophagosomes formation. May mediate the delivery of the autophagosomes to the vacuole via the microtubule cytoskeleton. The protein is Autophagy-related protein 8e (ATG8E) of Arabidopsis thaliana (Mouse-ear cress).